The sequence spans 939 residues: Trafficking kinesin-binding protein 1 (939 aa).

Residues 46–353 (LEEQLPHYKL…EELKNLRNKT (308 aa)) enclose the HAP1 N-terminal domain. A coiled-coil region spans residues 106 to 354 (KTYNDIDAVT…ELKNLRNKTM (249 aa)). The tract at residues 359–509 (RYHSLGLFPM…SLRRENYLSE (151 aa)) is interaction with HGS. The O-linked (GlcNAc) serine glycan is linked to Ser444. A disordered region spans residues 472–492 (LGNEDHNKKPGTPGTPGSHDL). A coiled-coil region spans residues 490 to 524 (HDLETALRRLSLRRENYLSERRFFEEEQERKLREL). Residue Ser534 is modified to Phosphoserine. Residues 655 to 669 (PGKCMSQTNSTFTFT) form an interaction with OGT region. Ser677 and Ser716 each carry an O-linked (GlcNAc) serine glycan. A phosphoserine mark is found at Ser716 and Ser905.

The protein belongs to the milton family. In terms of assembly, interacts with RHOT1 and RHOT2. Found in a complex with KIF5B, OGT, RHOT1 and RHOT2. Interacts with HGS. Interacts with GABRA1. Interacts with KIF5C. Interacts with OGT; stable interaction is not required for glycosylation of this protein by OGT. Isoform 1 interacts with OGT. Post-translationally, O-glycosylated. Glycosylated by OGT; glycosylation in response to increased extracellular glucose levels is required for and leads to regulation of mitochondrial motility by OGT. Widely expressed with the greatest expression in brain, liver and kidney. Detected throughout the CNS, including the cortex, hippocamps, thalamus and various subcortical nuclei of the forebrain and midbrain, the granule of Purkinje layers of the cerebellum and the gray matter of the spinal cord. High level detected in lower moter neurons (at protein level).

It localises to the cytoplasm. It is found in the nucleus. The protein resides in the mitochondrion. The protein localises to the early endosome. Its subcellular location is the endosome. It localises to the mitochondrion membrane. It is found in the cell cortex. Functionally, involved in the regulation of endosome-to-lysosome trafficking, including endocytic trafficking of EGF-EGFR complexes and GABA-A receptors. Involved in mitochondrial motility. When O-glycosylated, abolishes mitochondrial motility. Crucial for recruiting OGT to the mitochondrial surface of neuronal processes. TRAK1 and RHOT form an essential protein complex that links KIF5 to mitochondria for light chain-independent, anterograde transport of mitochondria. The sequence is that of Trafficking kinesin-binding protein 1 (Trak1) from Mus musculus (Mouse).